Reading from the N-terminus, the 61-residue chain is Small ribosomal subunit protein uS14 (61 aa).

Residues Cys-24, Cys-27, Cys-40, and Cys-43 each coordinate Zn(2+).

This sequence belongs to the universal ribosomal protein uS14 family. Zinc-binding uS14 subfamily. In terms of assembly, part of the 30S ribosomal subunit. Contacts proteins S3 and S10. It depends on Zn(2+) as a cofactor.

Binds 16S rRNA, required for the assembly of 30S particles and may also be responsible for determining the conformation of the 16S rRNA at the A site. This Halothermothrix orenii (strain H 168 / OCM 544 / DSM 9562) protein is Small ribosomal subunit protein uS14.